Consider the following 132-residue polypeptide: Keratin, high-sulfur matrix protein, IIIA3 (132 aa).

In terms of biological role, the keratin products of mammalian epidermal derivatives such as wool and hair consist of microfibrils embedded in a rigid matrix of other proteins. The matrix proteins include the high-sulfur and high-tyrosine keratins, having molecular weights of 6-20 kDa, whereas the microfibrils contain the larger, low-sulfur keratins (40-56 kDa). This chain is Keratin, high-sulfur matrix protein, IIIA3, found in Capra hircus (Goat).